Here is a 417-residue protein sequence, read N- to C-terminus: Probable diacetyl reductase [(R)-acetoin forming] 2 (417 aa).

Cys39 serves as a coordination point for Zn(2+). A Phosphoserine modification is found at Ser63. Residues His64, Cys120, Cys123, Cys131, and Gln173 each contribute to the Zn(2+) site. Residues 380-417 are disordered; it reads GELNREADNEKKEISELSSRKDQERLRESINEAKLRHT. Positions 381–417 are enriched in basic and acidic residues; that stretch reads ELNREADNEKKEISELSSRKDQERLRESINEAKLRHT.

The protein belongs to the zinc-containing alcohol dehydrogenase family. It depends on Zn(2+) as a cofactor.

The protein localises to the cytoplasm. Its subcellular location is the nucleus. The catalysed reaction is (R)-acetoin + NAD(+) = diacetyl + NADH + H(+). In terms of biological role, catalyzes the irreversible reduction of 2,3-butanediol to (S)-acetoin in the presence of NADH. The sequence is that of Probable diacetyl reductase [(R)-acetoin forming] 2 (BDH2) from Saccharomyces cerevisiae (strain ATCC 204508 / S288c) (Baker's yeast).